The chain runs to 257 residues: 5'-nucleotidase SurE (257 aa).

A divalent metal cation-binding residues include Asp8, Asp9, Ser40, and Asn92.

This sequence belongs to the SurE nucleotidase family. It depends on a divalent metal cation as a cofactor.

It localises to the cytoplasm. The catalysed reaction is a ribonucleoside 5'-phosphate + H2O = a ribonucleoside + phosphate. Functionally, nucleotidase that shows phosphatase activity on nucleoside 5'-monophosphates. In Rhizobium rhizogenes (strain K84 / ATCC BAA-868) (Agrobacterium radiobacter), this protein is 5'-nucleotidase SurE.